Consider the following 1029-residue polypeptide: Kinesin-like protein KIF17 (1029 aa).

The Kinesin motor domain occupies 5-335; that stretch reads AVKVVVRCRP…LRYANRAKNI (331 aa). Position 91-98 (91-98) interacts with ATP; it reads GQTGSGKS. Residues 346 to 462 are a coiled coil; sequence KDALLREYQE…EENLRKETEA (117 aa). Disordered stretches follow at residues 523–569 and 647–673; these read ELPK…MPTE and VPAPTDLLEPSDARPEAEAADDFPPRP. Residues 532–551 show a composition bias toward low complexity; the sequence is SEISLGSSESSSLEETSVSE. The segment covering 657 to 673 has biased composition (basic and acidic residues); that stretch reads SDARPEAEAADDFPPRP. Residues 739–846 adopt a coiled-coil conformation; the sequence is QQVLARLQLL…QLEKIDYLAT (108 aa). 2 disordered regions span residues 908–931 and 968–1029; these read AVSTGPQNKPARKTSAADNGEPNM and KSLT…SEPL.

Belongs to the TRAFAC class myosin-kinesin ATPase superfamily. Kinesin family. In terms of assembly, homodimer. Interacts with APBA1 (via PDZ domain); the interaction is direct and is required for association of KIF17 with the cargo that is to be transported. Interacts with IFT B complex components IFT52 and IFT57. Interacts with IFT70B. Interacts with PIWIL1. Interacts with TBATA.

It localises to the cytoplasm. It is found in the cytoskeleton. The protein resides in the cell projection. Its subcellular location is the cilium. The protein localises to the dendrite. Its function is as follows. Dendrite-specific motor protein which, in association with the Apba1-containing complex (LIN-10-LIN-2-LIN-7 complex), transports vesicles containing N-methyl-D-aspartate (NMDA) receptor subunit NR2B along microtubules. In Homo sapiens (Human), this protein is Kinesin-like protein KIF17 (KIF17).